The sequence spans 432 residues: Keratin, type I cytoskeletal 18-B (432 aa).

A compositionally biased stretch (low complexity) spans 1–21 (MSYSRSMYSSSSVVGGSPYRS). The interval 1–44 (MSYSRSMYSSSSVVGGSPYRSLSSAPRFAPGSSAASVHAGPGGS) is disordered. The head stretch occupies residues 2-82 (SYSRSMYSSS…NVSLMGGAQN (81 aa)). Residues 83-118 (EKETMQDLNDRLASYLERVRSLETANKELEVQIRQH) form a coil 1A region. The region spanning 83–393 (EKETMQDLND…RLLEGDSFDL (311 aa)) is the IF rod domain. Residues 119 to 134 (TEKKGPAKDWSPYYKA) are linker 1. The interval 135–226 (IEDLKKQVFD…KNHQDDVNEL (92 aa)) is coil 1B. A linker 12 region spans residues 227–250 (QAQIARSAVTVEVDAPKSQDLGKI). The tract at residues 251-388 (MAELRAQYDG…IHTYRRLLEG (138 aa)) is coil 2. A tail region spans residues 389 to 432 (DSFDLQDAVPTVTTQTVKKVITTTQRIVDGKVVAESNDTEVLKA).

It belongs to the intermediate filament family. Heterotetramer of two type I and two type II keratins. Keratin-18 associates with keratin-8. Post-translationally, phosphorylated. Proteolytically cleaved by caspases during epithelial cell apoptosis.

Its function is as follows. When phosphorylated, plays a role in filament reorganization. This is Keratin, type I cytoskeletal 18-B (krt18-b) from Xenopus laevis (African clawed frog).